The following is a 317-amino-acid chain: MAPPPAMKPASRKRGPPAPDPVELPPPGFVADRAEAAARVERLLRYQFRDGRLLEEALTHQSFADDAVSYQRLEFVGDSALGLAFSNFLYLTNPTLGPGPLSTLRAANISTEKLARVAVRHDLYPLLRRNCPRLDLLVGQFIETVKQEPEDDLSTVPYGGSVVKAPKVLADIVEAIAAAVYVDCKFDLEKLWKVTRWLFEPIITAETIDEQPVTMLHELCQKHGKMAQFKTWQKGGMTVVNVFVAGELVGIGSSEQKVIAKLNAARDATRKLAGAKKQVLTTGVGNGLGDEIGELRECKQKLNEQCSRQNWPKPIFK.

Positions 1–26 (MAPPPAMKPASRKRGPPAPDPVELPP) are disordered. Positions 16 to 26 (PPAPDPVELPP) are enriched in pro residues. The region spanning 37–185 (AARVERLLRY…IAAAVYVDCK (149 aa)) is the RNase III domain. Glu-74, Asp-171, and Glu-174 together coordinate Mg(2+). The 64-residue stretch at 211–274 (QPVTMLHELC…ARDATRKLAG (64 aa)) folds into the DRBM domain.

It depends on Mg(2+) as a cofactor. The cofactor is Mn(2+).

Cleaves double-stranded RNA (dsRNA). This chain is Ribonuclease 3-like protein 2, found in Oryza sativa subsp. japonica (Rice).